Consider the following 276-residue polypeptide: Pantothenate synthetase (276 aa).

25–32 (MGYLHRGH) provides a ligand contact to ATP. The active-site Proton donor is the histidine 32. Residue glutamine 56 participates in (R)-pantoate binding. A beta-alanine-binding site is contributed by glutamine 56. Residue 143–146 (GEKD) coordinates ATP. Glutamine 149 is a (R)-pantoate binding site. ATP contacts are provided by residues valine 172 and 180–183 (LSSR).

Belongs to the pantothenate synthetase family. In terms of assembly, homodimer.

It localises to the cytoplasm. It carries out the reaction (R)-pantoate + beta-alanine + ATP = (R)-pantothenate + AMP + diphosphate + H(+). Its pathway is cofactor biosynthesis; (R)-pantothenate biosynthesis; (R)-pantothenate from (R)-pantoate and beta-alanine: step 1/1. Functionally, catalyzes the condensation of pantoate with beta-alanine in an ATP-dependent reaction via a pantoyl-adenylate intermediate. The chain is Pantothenate synthetase from Thermus thermophilus (strain ATCC BAA-163 / DSM 7039 / HB27).